Here is a 362-residue protein sequence, read N- to C-terminus: Mitochondrial distribution and morphology protein 12 (362 aa).

The 361-residue stretch at 1-361 (MSFDINWSQL…WPSWLCFDMS (361 aa)) folds into the SMP-LTD domain. Disordered stretches follow at residues 65 to 141 (DFYE…AATP) and 170 to 207 (TPSG…SKRG). Polar residues-rich tracts occupy residues 106–119 (VTLS…TQFA) and 170–187 (TPSG…MRTG). Low complexity predominate over residues 192–201 (PISNTPISSS).

This sequence belongs to the MDM12 family. As to quaternary structure, component of the ER-mitochondria encounter structure (ERMES) or MDM complex, composed of MMM1, MDM10, MDM12 and MDM34. An MMM1 homodimer associates with one molecule of MDM12 on each side in a pairwise head-to-tail manner, and the SMP-LTD domains of MMM1 and MDM12 generate a continuous hydrophobic tunnel for phospholipid trafficking.

It is found in the mitochondrion outer membrane. The protein localises to the endoplasmic reticulum membrane. In terms of biological role, component of the ERMES/MDM complex, which serves as a molecular tether to connect the endoplasmic reticulum (ER) and mitochondria. Components of this complex are involved in the control of mitochondrial shape and protein biogenesis, and function in nonvesicular lipid trafficking between the ER and mitochondria. MDM12 is required for the interaction of the ER-resident membrane protein MMM1 and the outer mitochondrial membrane-resident beta-barrel protein MDM10. The MDM12-MMM1 subcomplex functions in the major beta-barrel assembly pathway that is responsible for biogenesis of all mitochondrial outer membrane beta-barrel proteins, and acts in a late step after the SAM complex. The MDM10-MDM12-MMM1 subcomplex further acts in the TOM40-specific pathway after the action of the MDM12-MMM1 complex. Essential for establishing and maintaining the structure of mitochondria and maintenance of mtDNA nucleoids. In Meyerozyma guilliermondii (strain ATCC 6260 / CBS 566 / DSM 6381 / JCM 1539 / NBRC 10279 / NRRL Y-324) (Yeast), this protein is Mitochondrial distribution and morphology protein 12.